Consider the following 560-residue polypeptide: Probable methionine--tRNA ligase, cytoplasmic (560 aa).

Positions 16 to 26 (PYVNNQPHLGN) match the 'HIGH' region motif. The short motif at 347-351 (KFSKS) is the 'KMSKS' region element. Residue lysine 350 participates in ATP binding.

The protein belongs to the class-I aminoacyl-tRNA synthetase family.

The protein resides in the cytoplasm. It catalyses the reaction tRNA(Met) + L-methionine + ATP = L-methionyl-tRNA(Met) + AMP + diphosphate. The sequence is that of Probable methionine--tRNA ligase, cytoplasmic from Vairimorpha ceranae (strain BRL01) (Microsporidian parasite).